The sequence spans 868 residues: Probable mixed-linked glucan synthase 3 (868 aa).

The segment at 36–68 (ERKAAGGGGGGAKGKHWAAADKGERRAAKECGG) is disordered. Basic and acidic residues predominate over residues 53–68 (AAADKGERRAAKECGG). The next 2 membrane-spanning stretches (helical) occupy residues 86 to 106 (LLHPYRALIFARLIAVLLFFG) and 116 to 136 (IMWFWTMSVAGDVWFGFSWLL). D211 is a catalytic residue. Positions 412 and 414 each coordinate substrate. D573 is a catalytic residue. A run of 6 helical transmembrane segments spans residues 649-669 (IYPVTSLFILLYAISPVMWLI), 686-706 (LLMIILMIHMIGWLEIKWAGI), 717-737 (FFMIGSTSAYPTAVLHMVVNL), 771-791 (MLIPTMVVLVANIGAIGVAIG), 809-829 (IMGLLFNMWVMFLLYPFALAI), and 837-857 (PIILVVLLPIIFVIVALVYVA).

The protein belongs to the glycosyltransferase 2 family. Plant cellulose synthase-like F subfamily.

It is found in the golgi apparatus membrane. May catalyze both beta-1,3 and beta-1,4 glycosidic linkage on beta-D-glucan. Essential for (1,3;1,4)-beta-D-glucans synthesis in grasses and cereals (Poaceae). The mixed-linked glucans (which are not present in walls of dicotyledons or most other monocotyledonous plants) are particularly important constituents of the walls of the starchy endosperm and aleurone cells of cereal grains such as oats, wheat, rice and barley. They can account for up to 70% by weight of the wall. The chain is Probable mixed-linked glucan synthase 3 (CSLF3) from Oryza sativa subsp. indica (Rice).